Consider the following 509-residue polypeptide: MDVFYPLKSTVAKFNECFPAILFIVLSAVAGIVLPLLLFLRSKRRSSVGLPPGKLGYPFIGESLLFLKALRSNTVEQFLDERVKNFGNVFKTSLIGHPTVVLCGPAGNRLILANEEKLVQMSWPKSSMKLMGEKSITAKRGEGHMIIRSALQGFFSPGALQKYIGQMSKTIENHINEKWKGNDQVSVVALVGDLVFDISACLFFNINEKHERERLFELLEIIAVGVLAVPVDLPGFAYHRALQARSKLNAILSGLIEKRKMDLSSGLATSNQDLLSVFLTFKDDRGNPCSDEEILDNFSGLLHGSYDTTVSAMACVFKLLSSNPECYEKVVQEQLGILSNKLEGDEITWKDVKSMKYTWQVVQETLRLYPSIFGSFRQAITDIHYNGYIIPKGWKLLWTPYTTHPKEMYFSEPEKFLPSRFDQEGKLVAPYTFLPFGGGQRSCPGWEFSKMEILLSVHHFVKTFSTFTPVDPAEIIARDSLCPLPSNGFSVKLFPRSYSLHTGNQVKKI.

3 consecutive transmembrane segments (helical) span residues 20–40, 186–206, and 218–238; these read AILF…LLFL, SVVA…FFNI, and LLEI…GFAY. Cysteine 443 contacts heme.

This sequence belongs to the cytochrome P450 family.

The protein localises to the microsome membrane. The enzyme catalyses 10beta-hydroxytaxa-4(20),11-dien-5alpha-yl acetate + NADPH + O2 + H(+) = 10beta,14beta-dihydroxytaxa-4(20),11-dien-5alpha-yl acetate + NADP(+) + H2O. It functions in the pathway alkaloid biosynthesis; taxol biosynthesis. Its function is as follows. Catalyzes the conversion of 5-alpha-acetoxy-10beta-ol to 5-alpha-acetoxy-10beta,14beta-dihydroxy taxadiene. Also acts on taxa-4(20),11-dien-5-alpha-yl acetate. This chain is Taxoid 14-beta-hydroxylase, found in Taxus cuspidata (Japanese yew).